The following is a 147-amino-acid chain: MVHWTAEEKAVINSVWQKVDVEQDGHEALTRLFIVYPWTQRYFSTFGDLSSPAAIAGNPKVHAHGKKILGAIDNAIHNLDDVKGTLHDLSEEHANELHVDPENFRRLGEVLIVVLGAKLGKAFSPQVQHVWEKFIAVLVDALSHSYH.

Positions 3 to 147 constitute a Globin domain; that stretch reads HWTAEEKAVI…LVDALSHSYH (145 aa). Residues His-64 and His-93 each coordinate heme b.

The protein belongs to the globin family. As to quaternary structure, heterotetramer of two alpha chains and two beta chains. In terms of tissue distribution, red blood cells.

In terms of biological role, this is a tadpole (larval) beta chain. In Aquarana catesbeiana (American bullfrog), this protein is Hemoglobin subunit beta-3.